The chain runs to 313 residues: 4-diphosphocytidyl-2-C-methyl-D-erythritol kinase (313 aa).

Lysine 27 is an active-site residue. 110-120 lines the ATP pocket; that stretch reads PIGGGVGGGSS. Aspartate 152 is a catalytic residue.

It belongs to the GHMP kinase family. IspE subfamily.

It catalyses the reaction 4-CDP-2-C-methyl-D-erythritol + ATP = 4-CDP-2-C-methyl-D-erythritol 2-phosphate + ADP + H(+). It functions in the pathway isoprenoid biosynthesis; isopentenyl diphosphate biosynthesis via DXP pathway; isopentenyl diphosphate from 1-deoxy-D-xylulose 5-phosphate: step 3/6. Catalyzes the phosphorylation of the position 2 hydroxy group of 4-diphosphocytidyl-2C-methyl-D-erythritol. This is 4-diphosphocytidyl-2-C-methyl-D-erythritol kinase from Histophilus somni (strain 2336) (Haemophilus somnus).